We begin with the raw amino-acid sequence, 67 residues long: LPS-assembly lipoprotein LptM (67 aa).

Positions 1–19 (MKNVFKTLAVLLTLFSLTG) are cleaved as a signal peptide. Cys20 carries N-palmitoyl cysteine lipidation. Cys20 is lipidated: S-diacylglycerol cysteine. Residues 26-67 (LYFPPADKNAPPPTKKVDSQTQSTMPDKNDRATGDGPSQVNY) form a disordered region.

This sequence belongs to the LptM family. Interacts with the outer membrane embedded portion of the LPS translocon formed by LptD and LptE (LptDE).

Its subcellular location is the cell outer membrane. Its function is as follows. Component of the lipopolysaccharide (LPS) transport (Lpt) pathway that promotes efficient assembly of the outer membrane LPS translocon (LptDE) by the BAM complex. Facilitates oxidative maturation of LptD by stabilizing a conformation of the LPS translocon in which LptD can efficiently acquire native disulfide bonds, thereby activating the LPS translocon. This Salmonella typhi protein is LPS-assembly lipoprotein LptM.